A 360-amino-acid polypeptide reads, in one-letter code: Protein phosphatase 1 regulatory subunit 7 (360 aa).

The segment at Met-1 to Glu-64 is disordered. Ala-2 carries the post-translational modification N-acetylalanine. Phosphoserine occurs at positions 12, 24, 27, 44, and 47. Residues Glu-17–Lys-34 show a composition bias toward basic and acidic residues. The span at Glu-53 to His-63 shows a compositional bias: acidic residues. 11 LRR repeats span residues Asp-77–Lys-98, Lys-99–Gln-120, Ser-121–Thr-142, Glu-143–Thr-164, Arg-165–His-186, Gln-187–Thr-208, Asn-209–Thr-230, Asn-231–Val-252, Asn-253–Asn-274, Lys-275–Thr-296, and Glu-297–Lys-318. Position 322 is a phosphoserine (Ser-322). The 30-residue stretch at Asn-331–Phe-360 folds into the LRRCT domain.

The protein belongs to the SDS22 family. As to quaternary structure, interacts with PPP1CA, PPP1CB and PPP1CC/PPP1G isoform 1. Widely expressed.

It is found in the nucleus. Its function is as follows. Regulatory subunit of protein phosphatase 1. The chain is Protein phosphatase 1 regulatory subunit 7 (PPP1R7) from Homo sapiens (Human).